The chain runs to 250 residues: MHILLANDDGYLAPGLAVLHAALAPLGRITVIAPEQNHSGASNSLTLQRPLSVYEAREGVQKGFRFVNGTPTDCVHIALTGLLEDKPDLVVSGINQGQNMGEDVLYSGTVAAAIEGYLLGIPSVAFSQVDKGWEHLDAAARVARTVVERIIGTPPAEPFLLNVNIPNLPFEHIRGYRATRLGKRHPSQPVITQVNPRGDTNYWIGPAGDARDASEGTDFHATAQGYVSLTPLQLDLTHRGQLDALDQWLK.

4 residues coordinate a divalent metal cation: D8, D9, S39, and N95.

The protein belongs to the SurE nucleotidase family. A divalent metal cation serves as cofactor.

It is found in the cytoplasm. The catalysed reaction is a ribonucleoside 5'-phosphate + H2O = a ribonucleoside + phosphate. Nucleotidase that shows phosphatase activity on nucleoside 5'-monophosphates. This Cupriavidus taiwanensis (strain DSM 17343 / BCRC 17206 / CCUG 44338 / CIP 107171 / LMG 19424 / R1) (Ralstonia taiwanensis (strain LMG 19424)) protein is 5'-nucleotidase SurE.